Here is a 139-residue protein sequence, read N- to C-terminus: Protein archease (139 aa).

Positions 12, 138, and 139 each coordinate Ca(2+).

It belongs to the archease family.

Activates the tRNA-splicing ligase complex by facilitating the enzymatic turnover of catalytic subunit RtcB. Acts by promoting the guanylylation of RtcB, a key intermediate step in tRNA ligation. Can also alter the NTP specificity of RtcB such that ATP, dGTP or ITP is used efficiently. This chain is Protein archease, found in Sulfolobus acidocaldarius (strain ATCC 33909 / DSM 639 / JCM 8929 / NBRC 15157 / NCIMB 11770).